The primary structure comprises 238 residues: Uridylate kinase (238 aa).

12–15 is an ATP binding site; that stretch reads KLSG. Residues 20-25 form an involved in allosteric activation by GTP region; sequence GEKGFG. Residue Gly-54 participates in UMP binding. The ATP site is built by Gly-55 and Arg-59. Residues Asp-72 and 133 to 140 each bind UMP; that span reads TGNPYFST. Tyr-166 and Asp-169 together coordinate ATP.

Belongs to the UMP kinase family. As to quaternary structure, homohexamer.

The protein resides in the cytoplasm. It carries out the reaction UMP + ATP = UDP + ADP. It functions in the pathway pyrimidine metabolism; CTP biosynthesis via de novo pathway; UDP from UMP (UMPK route): step 1/1. With respect to regulation, allosterically activated by GTP. Inhibited by UTP. Functionally, catalyzes the reversible phosphorylation of UMP to UDP. In Clostridium botulinum (strain Hall / ATCC 3502 / NCTC 13319 / Type A), this protein is Uridylate kinase.